Consider the following 98-residue polypeptide: NADH-ubiquinone oxidoreductase chain 4L (98 aa).

Transmembrane regions (helical) follow at residues 1 to 21, 29 to 49, and 61 to 81; these read MSLV…GLLM, SLLC…LTIL, and IILL…LVMV.

The protein belongs to the complex I subunit 4L family. In terms of assembly, core subunit of respiratory chain NADH dehydrogenase (Complex I) which is composed of 45 different subunits.

It is found in the mitochondrion inner membrane. It carries out the reaction a ubiquinone + NADH + 5 H(+)(in) = a ubiquinol + NAD(+) + 4 H(+)(out). Functionally, core subunit of the mitochondrial membrane respiratory chain NADH dehydrogenase (Complex I) which catalyzes electron transfer from NADH through the respiratory chain, using ubiquinone as an electron acceptor. Part of the enzyme membrane arm which is embedded in the lipid bilayer and involved in proton translocation. The chain is NADH-ubiquinone oxidoreductase chain 4L (MT-ND4L) from Muntiacus feae (Fea's muntjac).